A 335-amino-acid chain; its full sequence is GTPase Obg (335 aa).

One can recognise an Obg domain in the interval 1-159; sequence MKFVDSAKIS…YELEMELKLM (159 aa). The OBG-type G domain occupies 160–323; it reads ADVGLVGFPN…LKDELWRQVS (164 aa). GTP is bound by residues 166–173, 191–195, 213–216, 280–283, and 304–306; these read GFPNAGKS, FTTLV, DIPG, TKMD, and SSV. Mg(2+)-binding residues include serine 173 and threonine 193.

Belongs to the TRAFAC class OBG-HflX-like GTPase superfamily. OBG GTPase family. In terms of assembly, monomer. It depends on Mg(2+) as a cofactor.

It localises to the cytoplasm. Its function is as follows. An essential GTPase which binds GTP, GDP and possibly (p)ppGpp with moderate affinity, with high nucleotide exchange rates and a fairly low GTP hydrolysis rate. Plays a role in control of the cell cycle, stress response, ribosome biogenesis and in those bacteria that undergo differentiation, in morphogenesis control. This Chlorobaculum tepidum (strain ATCC 49652 / DSM 12025 / NBRC 103806 / TLS) (Chlorobium tepidum) protein is GTPase Obg.